We begin with the raw amino-acid sequence, 429 residues long: Enolase (429 aa).

(2R)-2-phosphoglycerate is bound at residue Gln163. Residue Glu205 is the Proton donor of the active site. Mg(2+) contacts are provided by Asp242, Glu287, and Asp314. (2R)-2-phosphoglycerate is bound by residues Lys339, Arg368, Ser369, and Lys390. The active-site Proton acceptor is Lys339.

It belongs to the enolase family. Homooctamer. The cofactor is Mg(2+).

It is found in the cytoplasm. Its subcellular location is the secreted. It localises to the cell surface. The enzyme catalyses (2R)-2-phosphoglycerate = phosphoenolpyruvate + H2O. Its pathway is carbohydrate degradation; glycolysis; pyruvate from D-glyceraldehyde 3-phosphate: step 4/5. Catalyzes the reversible conversion of 2-phosphoglycerate (2-PG) into phosphoenolpyruvate (PEP). It is essential for the degradation of carbohydrates via glycolysis. The polypeptide is Enolase (Zymomonas mobilis subsp. mobilis (strain ATCC 31821 / ZM4 / CP4)).